The primary structure comprises 1272 residues: MDLFDFFRDWDLEQQCHYEQDRSALKKREWERRNQEVQQEEDLFSSGFDLFGEPYKVAEYTNKGDALANRVQNTLGSYDEMKDLLSNHSSQNHLVGIPKNSAPQTPISKSEASFYPEQKNRMIPSHQETTHSSTPMPPPSVVILNSTLIHSNRKSKSEWPRDSHNTSPAQASQTSSQPNKMQTSTQDPPQTRLEDFFVYPAEQPQIGTVEKSNPSSKEENNPNSGGEDTFKEIFQSNSPEESEFTVQAPGSPLVASSLLAPSSGLSVPTFPPGLYCKTSMGQQKPTAYVRPMDGQDQATDISPTLKPSIEFENSFGNLSFGSLLDGKPSAVSSKTKLPKFTILQTSEVSLTSDPSCVEEILRESQHLTPGFTLQKWSDPSSRASTKMLEDDLKLSSDEDDLEPVKTLTTQCTANELYQAVEKAKPKNNPVNPLLATPQSTPATQTNVGSGSSSESESSSESDSDTESSTTDSESNEAPRVATPEPEPPSTNKWQLDKWLNKVTSQNKSFICGQNETPTETISLPPPIIQPVEVQVKVKPNPSQAVAVPKERPLLSLIREKARPRPTQKTPETKALKHKLSTSVDTVSQRTIGKKQPKKVEKNTSFEEFTWPKPNITNSTPKEKGSVELPDPPRSRNKATAHKPVPRKEPRPHVPLATEKKKYRGPGKIVPKSREFIETDSSTSDSNTDQEETLQIKVLPPCITSKSKETSNASLTLSTLTNGNSNNLSTSNEETAFSPPPAMQTELLSPLRDHENPKNLWVKIDLDLLSRVPGQNSVPVTPAKTDYKETASKPKRQTAATAVEKPAPKGKRKHKPAETAEKIPEKKQRLEDNTTICLLPPCISPAPPHKPPSTRENSSRRANRKKEEKLFPPALSPLAEDPPRRRNVSGNNGHFGQDKNISMAGQITSSKPKRSEGKFCATFKGISINEGDAPKKAASATVTVANMALATATATATVPAIVTATVTATATTTATATTTTTTTTISSITPTITSGLMDSSHLEMTSWAALPLLSSSSANVRRPKLTFDDSVHNADFYMQEAKKLKHKADALFEKFGKAVNYADAALSFTECGNAMERDPLEAKSPYTMYSETVELLRYAMRLKNFASPLASDGDKKLAVLCYRCLSLLYLRMFKLKKDHAMKYSRSLMEYFKQNASKVTQIPSPWVGNGKNTPSPVSLNNVSPINSVGNCNNGPVTIPQRIHHMAASHVNITSNVLRGYEHWDMADKLTRDNKEFFGDLDTLMGPLTQHSSMTNLVRYVRQGLCWLRIDAHLL.

Disordered regions lie at residues 151–190, 204–231, 372–401, 422–497, 557–694, 715–743, and 772–899; these read SNRK…DPPQ, PQIG…DTFK, TLQK…EDDL, KAKP…QLDK, IREK…ETLQ, TLST…PAMQ, and PGQN…QDKN. Positions 155–164 are enriched in basic and acidic residues; sequence SKSEWPRDSH. Residues 165 to 179 are compositionally biased toward low complexity; that stretch reads NTSPAQASQTSSQPN. Polar residues predominate over residues 180 to 189; it reads KMQTSTQDPP. Residues 210–227 are compositionally biased toward low complexity; the sequence is EKSNPSSKEENNPNSGGE. Over residues 374–384 the composition is skewed to polar residues; it reads QKWSDPSSRAS. Basic and acidic residues predominate over residues 387–396; that stretch reads MLEDDLKLSS. Position 395 is a phosphoserine (serine 395). Positions 436–450 are enriched in polar residues; the sequence is TPQSTPATQTNVGSG. Phosphothreonine is present on threonine 482. Positions 580-590 are enriched in polar residues; the sequence is STSVDTVSQRT. The span at 620 to 633 shows a compositional bias: basic and acidic residues; that stretch reads PKEKGSVELPDPPR. Positions 634–644 are enriched in basic residues; the sequence is SRNKATAHKPV. The span at 715-734 shows a compositional bias: low complexity; it reads TLSTLTNGNSNNLSTSNEET. Over residues 815–831 the composition is skewed to basic and acidic residues; it reads PAETAEKIPEKKQRLED. The span at 841–850 shows a compositional bias: pro residues; sequence CISPAPPHKP. Residues 887 to 899 are compositionally biased toward polar residues; the sequence is VSGNNGHFGQDKN.

This sequence belongs to the AF4 family. In terms of tissue distribution, highly expressed in the hippocampus, the piriform cortex, Purkinje cells and the cingulate gyrus.

It is found in the nucleus speckle. In terms of biological role, RNA-binding protein. Might be involved in alternative splicing regulation through an interaction with G-quartet RNA structure. The chain is AF4/FMR2 family member 2 from Mus musculus (Mouse).